The sequence spans 540 residues: Anti-sigma-I factor RsgI7 (540 aa).

The region spanning 1-48 (MRAMVVDMNDKYAVVVNKEGQYIKIKRKAEHRLGYQVELPDRVIGFER) is the RsgI N-terminal anti-sigma domain. Topologically, residues 1–50 (MRAMVVDMNDKYAVVVNKEGQYIKIKRKAEHRLGYQVELPDRVIGFERRT) are cytoplasmic. The chain crosses the membrane as a helical span at residues 51–73 (LLKVVSVAAALLIVSSISFAVYS). Residues 74–540 (YNLPYSYVNV…PGKEILKKRC (467 aa)) lie on the Extracellular side of the membrane. Composition is skewed to basic and acidic residues over residues 238 to 256 (DIKKVPNENNRKDDDKKVN), 319 to 329 (SGIDKGNKDSK), 338 to 351 (NDVKKDNKDNKTNS), 359 to 370 (VSKDNKNDKADG), and 398 to 419 (SKDDKDNKHVDSKDKMNNEDNK). Disordered regions lie at residues 238–429 (DIKK…CPQY) and 481–540 (QEEQ…KKRC). Positions 451 to 501 (KEDMTKQNDEWFKKMQEEQKKQYDEWLKKMQEEQKKQHDEWVKKMEEMKNT) form a coiled coil.

In terms of assembly, interacts (via RsgI N-terminal anti-sigma domain) with SigI7.

It is found in the cell membrane. Anti-sigma factor for SigI7. Negatively regulates SigI7 activity through direct interaction. The protein is Anti-sigma-I factor RsgI7 of Acetivibrio thermocellus (strain ATCC 27405 / DSM 1237 / JCM 9322 / NBRC 103400 / NCIMB 10682 / NRRL B-4536 / VPI 7372) (Clostridium thermocellum).